We begin with the raw amino-acid sequence, 107 residues long: Small ribosomal subunit protein bS16m (107 aa).

This sequence belongs to the bacterial ribosomal protein bS16 family. Component of the mitochondrial small ribosomal subunit (mt-SSU). Mature N.crassa 74S mitochondrial ribosomes consist of a small (37S) and a large (54S) subunit. The 37S small subunit contains a 16S ribosomal RNA (16S mt-rRNA) and 32 different proteins. The 54S large subunit contains a 23S rRNA (23S mt-rRNA) and 42 different proteins.

It localises to the mitochondrion. Functionally, component of the mitochondrial ribosome (mitoribosome), a dedicated translation machinery responsible for the synthesis of mitochondrial genome-encoded proteins, including at least some of the essential transmembrane subunits of the mitochondrial respiratory chain. The mitoribosomes are attached to the mitochondrial inner membrane and translation products are cotranslationally integrated into the membrane. In Neurospora crassa (strain ATCC 24698 / 74-OR23-1A / CBS 708.71 / DSM 1257 / FGSC 987), this protein is Small ribosomal subunit protein bS16m (cyt-21).